A 263-amino-acid polypeptide reads, in one-letter code: Transmembrane protein 176B (263 aa).

The next 4 membrane-spanning stretches (helical) occupy residues 61 to 81 (LGVT…CLYF), 89 to 109 (AFGC…GTIV), 121 to 141 (VSCL…VLGV), and 197 to 217 (LFLA…VVSV). Phosphoserine is present on residues serine 231, serine 240, and serine 253. A disordered region spans residues 239–263 (ESERKLLDGHPAPASPAKEKIPAIL).

It belongs to the TMEM176 family. As to expression, ubiquitously expressed with higher expression in lung, liver, kidney and colon. Expressed in cerebellar granule cells.

It localises to the nucleus membrane. Its function is as follows. May play a role in the process of maturation of dendritic cells. Required for the development of cerebellar granule cells. The sequence is that of Transmembrane protein 176B (Tmem176b) from Mus musculus (Mouse).